A 305-amino-acid polypeptide reads, in one-letter code: tRNA dimethylallyltransferase 2 (305 aa).

Gly-14–Thr-21 lines the ATP pocket. Thr-16 to Thr-21 contributes to the substrate binding site. Residues Asp-39–Gln-42 form an interaction with substrate tRNA region.

Belongs to the IPP transferase family. In terms of assembly, monomer. It depends on Mg(2+) as a cofactor.

It carries out the reaction adenosine(37) in tRNA + dimethylallyl diphosphate = N(6)-dimethylallyladenosine(37) in tRNA + diphosphate. Its function is as follows. Catalyzes the transfer of a dimethylallyl group onto the adenine at position 37 in tRNAs that read codons beginning with uridine, leading to the formation of N6-(dimethylallyl)adenosine (i(6)A). The polypeptide is tRNA dimethylallyltransferase 2 (Trichlorobacter lovleyi (strain ATCC BAA-1151 / DSM 17278 / SZ) (Geobacter lovleyi)).